A 456-amino-acid chain; its full sequence is Neurexin-3-beta (456 aa).

A signal peptide spans 1–35; sequence MHLRIHARRNPPRRPAWTLGIWSLFWGCIVSSVWS. Over 36–381 the chain is Extracellular; sequence SSNVASSSSS…EVIRESSSTT (346 aa). The interval 41–63 is disordered; that stretch reads SSSSSPGSHSQHEHHFHGSKHHS. The span at 52 to 63 shows a compositional bias: basic residues; sequence HEHHFHGSKHHS. A Laminin G-like domain is found at 82 to 282; it reads ATYIFGKSGG…NPNIKINGSV (201 aa). Ca(2+) contacts are provided by D134 and I151. N181 carries N-linked (GlcNAc...) asparagine glycosylation. The Ca(2+) site is built by I233 and N235. Residues N279 and N323 are each glycosylated (N-linked (GlcNAc...) asparagine). Residues 316-340 are disordered; it reads ATTTTRKNRSTASIQPTSDDLVSSA. Polar residues predominate over residues 325–340; the sequence is STASIQPTSDDLVSSA. S339 carries an O-linked (Xyl...) (heparan sulfate) serine glycan. A helical transmembrane segment spans residues 382 to 402; that stretch reads GMVVGIVAAAALCILILLYAM. Residues 403 to 456 are Cytoplasmic-facing; it reads YKYRNRDEGSYQVDETRNYISNSAQSNGTLLKEKPPSSKGGHKKQKNKDKEYYV. The segment at 424-456 is disordered; it reads NSAQSNGTLLKEKPPSSKGGHKKQKNKDKEYYV.

The protein belongs to the neurexin family. In terms of assembly, weakly interacts with CBLN1 and CBLN2. Very weak binding, if any, to CBLN4. Specific isoforms bind neuroligins NLGN1, NLGN2 and NLGN3. Interacts with CLSTN3. In terms of processing, processed by alpha-secretase leading to the formation of an extracellular soluble protein as well as a C-terminal membrane-embedded fragment (CTF). Proteolysis of these CTFs by gamma-secretase releases intracellular domains (ICDs) and extracellular peptides. O-glycosylated; contains heparan sulfate. Heparan sulfate attachment is required for synapse development by mediating interactions with neuroligins.

The protein resides in the presynaptic cell membrane. It is found in the secreted. Its function is as follows. Neuronal cell surface protein that may be involved in cell recognition and cell adhesion. May mediate intracellular signaling. Functions as part of a trans-synaptic complex by binding to cerebellins and postsynaptic GRID1. This interaction helps regulate the activity of NMDA and AMPA receptors at hippocampal synapses without affecting synapse formation. NRXN3B-CBLN2-GRID1 complex transduce presynaptic signals into postsynaptic AMPAR response. This chain is Neurexin-3-beta (NRXN3), found in Bos taurus (Bovine).